Consider the following 608-residue polypeptide: UvrABC system protein C (608 aa).

The GIY-YIG domain maps to 13–91 (HDPGVYRMFD…IKTFQPRYNV (79 aa)). In terms of domain architecture, UVR spans 201–236 (QQVLDHLIAKMETASRALDFENAARFRDQIQAVRAV).

Belongs to the UvrC family. Interacts with UvrB in an incision complex.

It is found in the cytoplasm. Functionally, the UvrABC repair system catalyzes the recognition and processing of DNA lesions. UvrC both incises the 5' and 3' sides of the lesion. The N-terminal half is responsible for the 3' incision and the C-terminal half is responsible for the 5' incision. The chain is UvrABC system protein C from Actinobacillus succinogenes (strain ATCC 55618 / DSM 22257 / CCUG 43843 / 130Z).